A 184-amino-acid polypeptide reads, in one-letter code: Cytidylate kinase (184 aa).

8–16 serves as a coordination point for ATP; it reads GQPGSGKTT.

The protein belongs to the cytidylate kinase family. Type 2 subfamily.

It localises to the cytoplasm. It catalyses the reaction CMP + ATP = CDP + ADP. The enzyme catalyses dCMP + ATP = dCDP + ADP. The chain is Cytidylate kinase from Pyrobaculum arsenaticum (strain DSM 13514 / JCM 11321 / PZ6).